We begin with the raw amino-acid sequence, 422 residues long: MVTIVLGSQWGDEGKGKITDLLSQKAELCCRSAGGHNAGHTIVHDDITYDFHILPSGLVSPTCVNLIGAGTVVHVPSFFKELASLDGKGLKDVRDRVFISDRAQVCFDLHAVVDGLEEAGLGTRKVGTTGKGIGPCYSDKAARRGVRIGDIMDEGVLESKLRSLEAGYRRRFGELDYNVEEEIARFKEYRSLLKPHIVDQLTLVKKFEDESASILVEGANALMLDIDYGTYPFVTSSCTGLGGAVQGVCLNPTSIKSIVGVVKAYCTRVGSGPFPTEQLNEVGEKLQVAGREFGVTTGRKRRCGWLDMVLLRYSARINHYTALNLTKLDILDDFDEIKVAVAYKLDGKELESFPASSDALEKVEIVYETLPGWKSTTMGVSKWEDLPVNAQKYVEYIEHSLGGVPIKWIGTGPARSHMIDRN.

GTP is bound by residues 11-17 (GDEGKGK) and 39-41 (GHT). The active-site Proton acceptor is the Asp-12. The Mg(2+) site is built by Asp-12 and Gly-39. IMP contacts are provided by residues 12–15 (DEGK), 37–40 (NAGH), Thr-129, Arg-143, Asn-220, Thr-235, and Arg-299. The active-site Proton donor is His-40. 295–301 (VTTGRKR) provides a ligand contact to substrate. GTP-binding positions include Arg-301, 327-329 (KLD), and 410-412 (GTG).

It belongs to the adenylosuccinate synthetase family. In terms of assembly, homodimer. It depends on Mg(2+) as a cofactor.

Its subcellular location is the cytoplasm. The catalysed reaction is IMP + L-aspartate + GTP = N(6)-(1,2-dicarboxyethyl)-AMP + GDP + phosphate + 2 H(+). Its pathway is purine metabolism; AMP biosynthesis via de novo pathway; AMP from IMP: step 1/2. Plays an important role in the de novo pathway and in the salvage pathway of purine nucleotide biosynthesis. Catalyzes the first committed step in the biosynthesis of AMP from IMP. This Arthroderma otae (strain ATCC MYA-4605 / CBS 113480) (Microsporum canis) protein is Adenylosuccinate synthetase.